A 392-amino-acid chain; its full sequence is uncharacterized protein (392 aa).

Belongs to the ROK (NagC/XylR) family.

This is an uncharacterized protein from Sinorhizobium fredii (strain NBRC 101917 / NGR234).